The primary structure comprises 250 residues: Probable aquaporin TIP2-2 (250 aa).

N-acetylmethionine is present on Met-1. Residues 1–24 (MVKIEIGSVGDSFSVASLKAYLSE) lie on the Cytoplasmic side of the membrane. Lys-3 carries the post-translational modification N6,N6-dimethyllysine. A helical transmembrane segment spans residues 25–45 (FIATLLFVFAGVGSALAFAKL). Residues 46–53 (TSDAALDP) lie on the Vacuolar side of the membrane. A helical transmembrane segment spans residues 54–74 (AGLVAVAVAHAFALFVGVSIA). Topologically, residues 75–101 (ANISGGHLNPAVTLGLAVGGNITVITG) are cytoplasmic. An NPA 1 motif is present at residues 83-85 (NPA). A helical membrane pass occupies residues 102–122 (FFYWIAQCLGSIVACLLLVFV). At 123–133 (TNGESVPTHGV) the chain is on the vacuolar side. Residues 134 to 154 (AAGLGAIEGVVMEIVVTFALV) traverse the membrane as a helical segment. Residues 155 to 168 (YTVYATAADPKKGS) are Cytoplasmic-facing. A helical transmembrane segment spans residues 169-189 (LGTIAPIAIGFIVGANILAAG). Over 190-210 (PFSGGSMNPARSFGPAVVSGD) the chain is Vacuolar. The NPA 2 signature appears at 197–199 (NPA). Residues 211 to 231 (FSQIWIYWVGPLVGGALAGLI) form a helical membrane-spanning segment. The Cytoplasmic segment spans residues 232-250 (YGDVFIGSYAPAPTTESYP). Residue Ser-248 is modified to Phosphoserine.

This sequence belongs to the MIP/aquaporin (TC 1.A.8) family. TIP (TC 1.A.8.10) subfamily. In terms of assembly, interacts with cucumber mosaic virus (CMV) Protein 1a. In terms of tissue distribution, expressed above groung and in roots.

Its subcellular location is the vacuole membrane. Functionally, aquaporins facilitate the transport of water and small neutral solutes across cell membranes. The sequence is that of Probable aquaporin TIP2-2 (TIP2-2) from Arabidopsis thaliana (Mouse-ear cress).